The sequence spans 519 residues: Bifunctional purine biosynthesis protein PurH (519 aa).

One can recognise an MGS-like domain in the interval 1–147 (MAKITRALIS…KNNHDVTVLV (147 aa)).

Belongs to the PurH family.

It catalyses the reaction (6R)-10-formyltetrahydrofolate + 5-amino-1-(5-phospho-beta-D-ribosyl)imidazole-4-carboxamide = 5-formamido-1-(5-phospho-D-ribosyl)imidazole-4-carboxamide + (6S)-5,6,7,8-tetrahydrofolate. The catalysed reaction is IMP + H2O = 5-formamido-1-(5-phospho-D-ribosyl)imidazole-4-carboxamide. Its pathway is purine metabolism; IMP biosynthesis via de novo pathway; 5-formamido-1-(5-phospho-D-ribosyl)imidazole-4-carboxamide from 5-amino-1-(5-phospho-D-ribosyl)imidazole-4-carboxamide (10-formyl THF route): step 1/1. It participates in purine metabolism; IMP biosynthesis via de novo pathway; IMP from 5-formamido-1-(5-phospho-D-ribosyl)imidazole-4-carboxamide: step 1/1. The polypeptide is Bifunctional purine biosynthesis protein PurH (Trichlorobacter lovleyi (strain ATCC BAA-1151 / DSM 17278 / SZ) (Geobacter lovleyi)).